Here is a 242-residue protein sequence, read N- to C-terminus: 4-hydroxy-tetrahydrodipicolinate reductase (242 aa).

NAD(+)-binding positions include 8 to 13 (GAKGRM), 75 to 77 (GTT), and 99 to 102 (ATNM). Residue H131 is the Proton donor/acceptor of the active site. H132 is a (S)-2,3,4,5-tetrahydrodipicolinate binding site. K135 acts as the Proton donor in catalysis. 141–142 (GT) provides a ligand contact to (S)-2,3,4,5-tetrahydrodipicolinate.

It belongs to the DapB family.

The protein localises to the cytoplasm. It carries out the reaction (S)-2,3,4,5-tetrahydrodipicolinate + NAD(+) + H2O = (2S,4S)-4-hydroxy-2,3,4,5-tetrahydrodipicolinate + NADH + H(+). The catalysed reaction is (S)-2,3,4,5-tetrahydrodipicolinate + NADP(+) + H2O = (2S,4S)-4-hydroxy-2,3,4,5-tetrahydrodipicolinate + NADPH + H(+). It participates in amino-acid biosynthesis; L-lysine biosynthesis via DAP pathway; (S)-tetrahydrodipicolinate from L-aspartate: step 4/4. In terms of biological role, catalyzes the conversion of 4-hydroxy-tetrahydrodipicolinate (HTPA) to tetrahydrodipicolinate. This chain is 4-hydroxy-tetrahydrodipicolinate reductase, found in Campylobacter jejuni subsp. jejuni serotype O:6 (strain 81116 / NCTC 11828).